Reading from the N-terminus, the 339-residue chain is MAQSITFTFGAVAAAGIALAAGTAAQADTWRYAFEEAMTDVQGVYAQKFKEEIEANSDHEIQLFPYGTLGESADIMEQTQDGILQFVDQSPGFTGSLIPEAQVFFVPYLLPTDQDHLARFFKESKAINDMFKPLYADQGLELLNMFPEGEVAMTTKTPVTTCSDLDEVKFRVMTNPLLVESYKAFGATPTPLPWGEVYGGLQTNVIQGQENPTFFLYSTKIYEVTDYITYAGHNNFTTAVMANKDFYDGLSAEDQQLVQNAALAAYDHTVVYQQQAADTELAKIMEAKPEMQVTVLTDEQRSCFKEAAAEVEAKFIEMTGDSGAAILKQMKADLAATAN.

An N-terminal signal peptide occupies residues 1-20 (MAQSITFTFGAVAAAGIALA). L-ectoine contacts are provided by glutamate 36, arginine 171, asparagine 211, phenylalanine 215, and phenylalanine 236. A disulfide bridge links cysteine 162 with cysteine 303.

It belongs to the bacterial solute-binding protein 7 family. In terms of assembly, monomer. The complex comprises the extracytoplasmic solute receptor protein UehA, and the two transmembrane proteins UehB and UehC.

Its subcellular location is the periplasm. Functionally, part of the tripartite ATP-independent periplasmic (TRAP) transport system UehABC, which imports both ectoine and 5-hydroxyectoine as nutrients, and not as osmoprotectants. UehA binds both ectoine and 5-hydroxyectoine with high specificity and affinity. The protein is Ectoine/5-hydroxyectoine-binding periplasmic protein UehA of Ruegeria pomeroyi (strain ATCC 700808 / DSM 15171 / DSS-3) (Silicibacter pomeroyi).